A 348-amino-acid chain; its full sequence is Ileal sodium/bile acid cotransporter (348 aa).

Topologically, residues 1–28 (MDNSSICNPNATICEGDSCIAPESNFNA) are extracellular. N-linked (GlcNAc...) asparagine glycosylation is found at N3 and N10. The chain crosses the membrane as a helical span at residues 29-49 (ILSVVMSTVLTILLALVMFSM). Residues 50–81 (GCNVELHKFLGHLRRPWGIVVGFLCQFGIMPL) lie on the Cytoplasmic side of the membrane. Residues 82–102 (TGFVLSVAFGILPVQAVVVLI) form a helical membrane-spanning segment. Residues 103 to 126 (QGCCPGGTASNILAYWVDGDMDLS) are Extracellular-facing. The chain crosses the membrane as a helical span at residues 127–147 (VSMTTCSTLLALGMMPLCLFI). Topologically, residues 148–157 (YTKMWVDSGT) are cytoplasmic. A helical transmembrane segment spans residues 158-178 (IVIPYDSIGTSLVALVIPVSI). Over 179 to 195 (GMYVNHKWPQKAKIILK) the chain is Extracellular. The helical transmembrane segment at 196–216 (IGSIAGAILIVLIAVVGGILY) threads the bilayer. Residues 217 to 224 (QSAWTIEP) lie on the Cytoplasmic side of the membrane. A helical membrane pass occupies residues 225 to 245 (KLWIIGTIYPIAGYGLGFFLA). The Extracellular segment spans residues 246-284 (RIAGQPWYRCRTVALETGLQNTQLCSTIVQLSFSPEDLN). A helical membrane pass occupies residues 285–305 (LVFTFPLIYSIFQIAFAAILL). At 306–348 (GAYVAYKKCHGKNNTELQEKTDNEMEPRSSFQETNKGFQPDEK) the chain is on the cytoplasmic side. The segment covering 322–332 (LQEKTDNEMEP) has biased composition (basic and acidic residues). The tract at residues 322-348 (LQEKTDNEMEPRSSFQETNKGFQPDEK) is disordered. S335 carries the post-translational modification Phosphoserine.

Belongs to the bile acid:sodium symporter (BASS) (TC 2.A.28) family. As to quaternary structure, monomer and homodimer. Mainly expressed in ileum and kidney, lower expression in jejunum.

It is found in the membrane. The catalysed reaction is taurocholate(out) + 2 Na(+)(out) = taurocholate(in) + 2 Na(+)(in). The enzyme catalyses cholate(out) + 2 Na(+)(out) = cholate(in) + 2 Na(+)(in). It carries out the reaction taurochenodeoxycholate(out) + 2 Na(+)(out) = taurochenodeoxycholate(in) + 2 Na(+)(in). It catalyses the reaction tauroursodeoxycholate(out) + 2 Na(+)(out) = tauroursodeoxycholate(in) + 2 Na(+)(in). The catalysed reaction is glycocholate(out) + 2 Na(+)(out) = glycocholate(in) + 2 Na(+)(in). The enzyme catalyses tauronorcholate(out) + 2 Na(+)(out) = tauronorcholate(in) + 2 Na(+)(in). It carries out the reaction tauroallocholate(out) + 2 Na(+)(out) = tauroallocholate(in) + 2 Na(+)(in). It catalyses the reaction taurodeoxycholate(out) + 2 Na(+)(out) = taurodeoxycholate(in) + 2 Na(+)(in). The catalysed reaction is tauro-beta-muricholate(out) + 2 Na(+)(out) = tauro-beta-muricholate(in) + 2 Na(+)(in). Plays a critical role in the sodium-dependent reabsorption of bile acids from the lumen of the small intestine. Transports various bile acids, unconjugated or conjugated, such as cholate and taurocholate. Also responsible for bile acid transport in the renal proximal tubules, a salvage mechanism that helps conserve bile acids. Works collaboratively with the Na(+)-taurocholate cotransporting polypeptide (NTCP), the organic solute transporter (OST), and the bile salt export pump (BSEP), to ensure efficacious biological recycling of bile acids during enterohepatic circulation. The chain is Ileal sodium/bile acid cotransporter (SLC10A2) from Cricetulus griseus (Chinese hamster).